The chain runs to 796 residues: Protein translocase subunit SecA 2 (796 aa).

ATP contacts are provided by residues Q84, 102-106 (GEGKT), and D496.

The protein belongs to the SecA family. As to quaternary structure, monomer and homodimer. Part of the essential Sec protein translocation apparatus which comprises SecA, SecYEG and auxiliary proteins SecDF. Other proteins may also be involved.

Its subcellular location is the cell membrane. It localises to the cytoplasm. The enzyme catalyses ATP + H2O + cellular proteinSide 1 = ADP + phosphate + cellular proteinSide 2.. Part of the Sec protein translocase complex. Interacts with the SecYEG preprotein conducting channel. Has a central role in coupling the hydrolysis of ATP to the transfer of proteins into and across the cell membrane, serving as an ATP-driven molecular motor driving the stepwise translocation of polypeptide chains across the membrane. The protein is Protein translocase subunit SecA 2 of Staphylococcus epidermidis (strain ATCC 35984 / DSM 28319 / BCRC 17069 / CCUG 31568 / BM 3577 / RP62A).